Reading from the N-terminus, the 233-residue chain is MSNLSNLRHKLQNGLIASCQPVPGSAMDTPEIVAAMACAALAGGAVGLRIEGISNIQAVRRATDAPIIGIIKRDLPDSEVRITPWLEDIDALSAAGADIIAFDVTCRERPVSVADLYQRARATGCLTMADASNIDDGLLAHHLGIDFIGTTLSGYTQAIVPTEPDLALVTQLAQAGCRVIAEGRYHSPALAAAAISAGAYAVTVGSAITRIEHICGWFCDAIKQCETEKLTEY.

Belongs to the NanE family.

It catalyses the reaction an N-acyl-D-glucosamine 6-phosphate = an N-acyl-D-mannosamine 6-phosphate. The protein operates within amino-sugar metabolism; N-acetylneuraminate degradation; D-fructose 6-phosphate from N-acetylneuraminate: step 3/5. Its function is as follows. Converts N-acetylmannosamine-6-phosphate (ManNAc-6-P) to N-acetylglucosamine-6-phosphate (GlcNAc-6-P). The polypeptide is Putative N-acetylmannosamine-6-phosphate 2-epimerase (Yersinia pseudotuberculosis serotype IB (strain PB1/+)).